A 591-amino-acid polypeptide reads, in one-letter code: Aspartate--tRNA(Asp/Asn) ligase (591 aa).

Glu174 is an L-aspartate binding site. Residues 198–201 are aspartate; it reads QLFK. Arg220 is a binding site for L-aspartate. ATP is bound by residues 220–222 and Gln229; that span reads RDE. His450 contacts L-aspartate. Glu483 lines the ATP pocket. Position 490 (Arg490) interacts with L-aspartate. 535–538 is an ATP binding site; it reads GLDR.

This sequence belongs to the class-II aminoacyl-tRNA synthetase family. Type 1 subfamily. In terms of assembly, homodimer.

The protein resides in the cytoplasm. The enzyme catalyses tRNA(Asx) + L-aspartate + ATP = L-aspartyl-tRNA(Asx) + AMP + diphosphate. In terms of biological role, aspartyl-tRNA synthetase with relaxed tRNA specificity since it is able to aspartylate not only its cognate tRNA(Asp) but also tRNA(Asn). Reaction proceeds in two steps: L-aspartate is first activated by ATP to form Asp-AMP and then transferred to the acceptor end of tRNA(Asp/Asn). The protein is Aspartate--tRNA(Asp/Asn) ligase of Pseudomonas putida (strain ATCC 700007 / DSM 6899 / JCM 31910 / BCRC 17059 / LMG 24140 / F1).